Here is a 407-residue protein sequence, read N- to C-terminus: Multifunctional CCA protein (407 aa).

2 residues coordinate ATP: G8 and R11. G8 and R11 together coordinate CTP. The Mg(2+) site is built by D21 and D23. ATP contacts are provided by R91, R137, and R140. CTP contacts are provided by R91, R137, and R140. One can recognise an HD domain in the interval 228 to 329 (SGIHTLMVAQ…IKIFDKMDVW (102 aa)).

This sequence belongs to the tRNA nucleotidyltransferase/poly(A) polymerase family. Bacterial CCA-adding enzyme type 1 subfamily. As to quaternary structure, monomer. Can also form homodimers and oligomers. Mg(2+) is required as a cofactor. Requires Ni(2+) as cofactor.

The catalysed reaction is a tRNA precursor + 2 CTP + ATP = a tRNA with a 3' CCA end + 3 diphosphate. The enzyme catalyses a tRNA with a 3' CCA end + 2 CTP + ATP = a tRNA with a 3' CCACCA end + 3 diphosphate. Functionally, catalyzes the addition and repair of the essential 3'-terminal CCA sequence in tRNAs without using a nucleic acid template. Adds these three nucleotides in the order of C, C, and A to the tRNA nucleotide-73, using CTP and ATP as substrates and producing inorganic pyrophosphate. tRNA 3'-terminal CCA addition is required both for tRNA processing and repair. Also involved in tRNA surveillance by mediating tandem CCA addition to generate a CCACCA at the 3' terminus of unstable tRNAs. While stable tRNAs receive only 3'-terminal CCA, unstable tRNAs are marked with CCACCA and rapidly degraded. The chain is Multifunctional CCA protein from Aliivibrio fischeri (strain MJ11) (Vibrio fischeri).